We begin with the raw amino-acid sequence, 206 residues long: LexA repressor (206 aa).

A DNA-binding region (H-T-H motif) is located at residues 28 to 48 (VREIGEAVGLASSSTVHGHLA). Residues Ser128 and Lys166 each act as for autocatalytic cleavage activity in the active site.

This sequence belongs to the peptidase S24 family. Homodimer.

It catalyses the reaction Hydrolysis of Ala-|-Gly bond in repressor LexA.. Its function is as follows. Represses a number of genes involved in the response to DNA damage (SOS response), including recA and lexA. In the presence of single-stranded DNA, RecA interacts with LexA causing an autocatalytic cleavage which disrupts the DNA-binding part of LexA, leading to derepression of the SOS regulon and eventually DNA repair. The chain is LexA repressor from Bacillus pumilus (strain SAFR-032).